A 210-amino-acid chain; its full sequence is Syntaxin-binding protein 6 (210 aa).

Serine 2 is subject to N-acetylserine. The region spanning 151 to 210 is the v-SNARE coiled-coil homology domain; it reads GNSILHSAADSVTSAVQKASQALNERGERLGRAEEKTEDMKNSAQQFAETAHKLAMKHKC.

Part of a ternary complex containing SNAP25 and STX1A that can be dissociated by NAPA and NSF. Interacts with STX4A.

It is found in the cytoplasm. Its subcellular location is the membrane. In terms of biological role, forms non-fusogenic complexes with SNAP25 and STX1A and may thereby modulate the formation of functional SNARE complexes and exocytosis. This Mus musculus (Mouse) protein is Syntaxin-binding protein 6 (Stxbp6).